Consider the following 425-residue polypeptide: Alpha/beta hydrolase xenA (425 aa).

D366 is an active-site residue.

This sequence belongs to the AB hydrolase superfamily. FUS2 hydrolase family. As to quaternary structure, homodimer.

Its pathway is mycotoxin biosynthesis. In terms of biological role, alpha/beta hydrolase; part of the gene cluster that mediates the biosynthesis of xenoacremones such as xenoacremone A, a compound that shows inhibitory activity toward the PI3K/AKT signaling pathway and which has the ability to induce apoptosis of A549 lung cancer cells. Within the pathway, cooperation of the hybrid PKS-NRPS xenE and the trans-acting enoyl reductase xenG is responsible for the formation of the reduced tyrosine-nonaketide derivative. The alpha/beta hydrolase xenA then accelerates intramolecular nucleophilic attack to give a pyrrolidone derivative. Subsequently, three enzymes, xenF, xenD, and xenC, coordinately participate in the conversion to xenoacremone B. XenF catalyzes sigmatropic rearrangement to form an A-ring, which leads to an unusual intermediate with a hexane ring, which is required for the formation of the tricarbocyclic product. Epoxidation catalyzed by xenD and the formation of the paracyclophane ether catalyzed by xenC initiate a spontaneous intramolecular Diels-Alder (IMDA) reaction to yield xenoacremone B. Spontaneous hydration of xenoacremone B leads to the formation of xenoacremone A, which undergoes subsequent methylation to afford xenoacremone C. This is Alpha/beta hydrolase xenA from Xenoacremonium sinensis (Endophyte fungus).